Here is a 180-residue protein sequence, read N- to C-terminus: Bifunctional protein PyrR (180 aa).

The PRPP-binding signature appears at 101–113 (VILVDDVLYTGRT).

Belongs to the purine/pyrimidine phosphoribosyltransferase family. PyrR subfamily. Homodimer and homohexamer; in equilibrium.

It catalyses the reaction UMP + diphosphate = 5-phospho-alpha-D-ribose 1-diphosphate + uracil. In terms of biological role, regulates transcriptional attenuation of the pyrimidine nucleotide (pyr) operon by binding in a uridine-dependent manner to specific sites on pyr mRNA. This disrupts an antiterminator hairpin in the RNA and favors formation of a downstream transcription terminator, leading to a reduced expression of downstream genes. Also displays a weak uracil phosphoribosyltransferase activity which is not physiologically significant. The sequence is that of Bifunctional protein PyrR from Bacillus cereus (strain ATCC 14579 / DSM 31 / CCUG 7414 / JCM 2152 / NBRC 15305 / NCIMB 9373 / NCTC 2599 / NRRL B-3711).